Reading from the N-terminus, the 260-residue chain is ARL14 effector protein (260 aa).

N-acetylmethionine is present on M1. Residue K177 forms a Glycyl lysine isopeptide (Lys-Gly) (interchain with G-Cter in SUMO2) linkage. S183 carries the phosphoserine modification.

In terms of assembly, interacts with ARL14 and MYO1E.

The protein resides in the cytoplasm. In terms of biological role, through its interaction with ARL14 and MYO1E, may connect MHC class II-containing cytoplasmic vesicles to the actin network and hence controls the movement of these vesicles along the actin cytoskeleton in dendritic cells. This is ARL14 effector protein (ARL14EP) from Bos taurus (Bovine).